The primary structure comprises 181 residues: uncharacterized protein (181 aa).

The protein to M.jannaschii MJ1106.

This is an uncharacterized protein from Methanothermobacter thermautotrophicus (strain ATCC 29096 / DSM 1053 / JCM 10044 / NBRC 100330 / Delta H) (Methanobacterium thermoautotrophicum).